The primary structure comprises 141 residues: Hemoglobin subunit alpha-1 (141 aa).

One can recognise a Globin domain in the interval 1 to 141 (VLTDEDKARV…LSKDLVSKYR (141 aa)). An O2-binding site is contributed by histidine 58. Histidine 87 provides a ligand contact to heme b.

Belongs to the globin family. As to quaternary structure, heterotetramer of two alpha chains and two beta chains. In terms of tissue distribution, red blood cells.

Functionally, involved in oxygen transport from the lung to the various peripheral tissues. This Naja naja (Indian cobra) protein is Hemoglobin subunit alpha-1.